A 149-amino-acid polypeptide reads, in one-letter code: 3-dehydroquinate dehydratase (149 aa).

The active-site Proton acceptor is the Tyr-22. Positions 73, 79, and 86 each coordinate substrate. Residue His-99 is the Proton donor of the active site. Residues 100 to 101 (LS) and Arg-110 each bind substrate.

The protein belongs to the type-II 3-dehydroquinase family. Homododecamer.

It catalyses the reaction 3-dehydroquinate = 3-dehydroshikimate + H2O. It participates in metabolic intermediate biosynthesis; chorismate biosynthesis; chorismate from D-erythrose 4-phosphate and phosphoenolpyruvate: step 3/7. Functionally, catalyzes a trans-dehydration via an enolate intermediate. This chain is 3-dehydroquinate dehydratase, found in Prochlorococcus marinus (strain MIT 9313).